Reading from the N-terminus, the 353-residue chain is Melanin-concentrating hormone receptor 1 (353 aa).

The Extracellular portion of the chain corresponds to 1–45 (MDLQASLLSTGPNASNISDGQDNFTLAGPPPRTRSVSYINIIMPS). N-linked (GlcNAc...) asparagine glycosylation is found at asparagine 13, asparagine 16, and asparagine 23. The chain crosses the membrane as a helical span at residues 46–66 (VFGTICLLGIVGNSTVIFAVV). Topologically, residues 67–79 (KKSKLHWCSNVPD) are cytoplasmic. The helical transmembrane segment at 80 to 100 (IFIINLSVVDLLFLLGMPFMI) threads the bilayer. Topologically, residues 101 to 116 (HQLMGNGVWHFGETMC) are extracellular. Cysteine 116 and cysteine 194 are oxidised to a cystine. The helical transmembrane segment at 117 to 139 (TLITAMDANSQFTSTYILTAMAI) threads the bilayer. The Cytoplasmic portion of the chain corresponds to 140–161 (DRYLATVHPISSTKFRKPSMAT). The chain crosses the membrane as a helical span at residues 162–182 (LVICLLWALSFISITPVWLYA). Residues 183-204 (RLIPFPGGAVGCGIRLPNPDTD) lie on the Extracellular side of the membrane. A helical membrane pass occupies residues 205–225 (LYWFTLYQFFLAFALPFVVIT). At 226–256 (AAYVKILQRMTSSVAPASQRSIRLRTKRVTR) the chain is on the cytoplasmic side. The helical transmembrane segment at 257–277 (TAIAICLVFFVCWAPYYVLQL) threads the bilayer. The Extracellular segment spans residues 278-294 (TQLSISRPTLTFVYLYN). A helical membrane pass occupies residues 295–315 (AAISLGYANSCLNPFVYIVLC). Residues 316 to 353 (ETFRKRLVLSVKPAAQGQLRTVSNAQTADEERTESKGT) lie on the Cytoplasmic side of the membrane.

The protein belongs to the G-protein coupled receptor 1 family. As to quaternary structure, interacts with NCDN. Expressed predominantly in the brain. Expression in brain is negatively regulated by leptin. Also found in the epithelium of the tongue and kidney.

Its subcellular location is the cell membrane. In terms of biological role, receptor for melanin-concentrating hormone, coupled to both G proteins that inhibit adenylyl cyclase and G proteins that activate phosphoinositide hydrolysis. The sequence is that of Melanin-concentrating hormone receptor 1 from Mus musculus (Mouse).